The primary structure comprises 145 residues: Protein SprT-like (145 aa).

In terms of domain architecture, SprT-like spans 4-140; it reads TNYVQEVSLA…VCGNCHGKLI (137 aa). Zn(2+) is bound at residue histidine 64. Glutamate 65 is a catalytic residue. Histidine 68 contributes to the Zn(2+) binding site.

It belongs to the SprT family. It depends on Zn(2+) as a cofactor.

The protein resides in the cytoplasm. The chain is Protein SprT-like from Streptococcus pyogenes serotype M18 (strain MGAS8232).